We begin with the raw amino-acid sequence, 229 residues long: NAD-dependent protein deacetylase (229 aa).

Positions 1–229 (MNKLNEALKK…SDAVKVFEEI (229 aa)) constitute a Deacetylase sirtuin-type domain. Positions 20, 32, 96, 98, 99, 114, 181, 182, 205, and 223 each coordinate NAD(+). Ile98 and Asp99 together coordinate nicotinamide. Catalysis depends on His114, which acts as the Proton acceptor.

The protein belongs to the sirtuin family. Class U subfamily.

The protein localises to the cytoplasm. It catalyses the reaction N(6)-acetyl-L-lysyl-[protein] + NAD(+) + H2O = 2''-O-acetyl-ADP-D-ribose + nicotinamide + L-lysyl-[protein]. In terms of biological role, NAD-dependent protein deacetylase which modulates the activities of several enzymes which are inactive in their acetylated form. The polypeptide is NAD-dependent protein deacetylase (Listeria monocytogenes serovar 1/2a (strain ATCC BAA-679 / EGD-e)).